A 116-amino-acid chain; its full sequence is MKLAIGRLLSPLFLKNPQKPLIITKRFYSTPGERRIKDILTEKLSPSSLRVIDVSGGCGSMYQVAIKSKAFQGKNTLAQHRLVNSILKEEIRNMHGLNLSTEVEDDISAGGSTTSS.

It belongs to the BolA/IbaG family.

The protein resides in the mitochondrion. This is an uncharacterized protein from Schizosaccharomyces pombe (strain 972 / ATCC 24843) (Fission yeast).